We begin with the raw amino-acid sequence, 338 residues long: Aspartate-semialdehyde dehydrogenase (338 aa).

NADP(+) contacts are provided by residues 13 to 16 and 41 to 42; these read TGNV and SS. R101 is a phosphate binding site. C132 acts as the Acyl-thioester intermediate in catalysis. Q159 is a substrate binding site. NADP(+)-binding positions include 162-163 and P187; that span reads SG. Phosphate is bound at residue K216. A substrate-binding site is contributed by R237. Residue H244 is the Proton acceptor of the active site. N317 contacts NADP(+).

Belongs to the aspartate-semialdehyde dehydrogenase family. Homodimer.

The enzyme catalyses L-aspartate 4-semialdehyde + phosphate + NADP(+) = 4-phospho-L-aspartate + NADPH + H(+). It participates in amino-acid biosynthesis; L-lysine biosynthesis via DAP pathway; (S)-tetrahydrodipicolinate from L-aspartate: step 2/4. Its pathway is amino-acid biosynthesis; L-methionine biosynthesis via de novo pathway; L-homoserine from L-aspartate: step 2/3. The protein operates within amino-acid biosynthesis; L-threonine biosynthesis; L-threonine from L-aspartate: step 2/5. Catalyzes the NADPH-dependent formation of L-aspartate-semialdehyde (L-ASA) by the reductive dephosphorylation of L-aspartyl-4-phosphate. This is Aspartate-semialdehyde dehydrogenase from Rickettsia conorii (strain ATCC VR-613 / Malish 7).